A 119-amino-acid polypeptide reads, in one-letter code: Cysteine-rich DPF motif domain-containing protein 1 (119 aa).

Belongs to the CDPF1 family.

The sequence is that of Cysteine-rich DPF motif domain-containing protein 1 (Cdpf1) from Mus musculus (Mouse).